We begin with the raw amino-acid sequence, 1009 residues long: Rho-type GTPase-activating protein 2 (1009 aa).

LIM zinc-binding domains lie at 11–68 (SLCV…DCSD) and 69–129 (KCTN…LLRK). The segment covering 143–155 (KEDFPIKLPERSV) has biased composition (basic and acidic residues). Disordered stretches follow at residues 143-228 (KEDF…RTVS), 358-433 (TKEN…LSRS), 449-608 (TSEM…DATD), 664-709 (TREK…ASPK), and 723-780 (QVGD…DYTP). Residues 162–196 (TRINGKSDVSTNNTAISKNLVSSNEDQQLTPQVLV) show a composition bias toward polar residues. Basic and acidic residues predominate over residues 212–222 (DNSKDREETSS). Composition is skewed to polar residues over residues 363 to 385 (KSSQGIQTSTSKSMNHVSPITRT) and 399 to 414 (LRLSDNGSFSRPQTAD). Basic residues predominate over residues 481–491 (NIRKSKAKKNP). Composition is skewed to polar residues over residues 493 to 510 (SRGQSDSTIYNTLPQHGN) and 522 to 553 (QSSLGSISKKQNSNDTATNRRINGSFTSSSSG). Residues 664-682 (TREKDKQSASSRESLEQKE) are compositionally biased toward basic and acidic residues. Polar residues-rich tracts occupy residues 683-707 (NIATSITVKSPSSNSDRKGSISNAS) and 728-749 (ESQQRSPNSSSGGTTNIAQKEI). S763 carries the phosphoserine modification. In terms of domain architecture, Rho-GAP spans 788 to 1006 (SSLQARCAYE…FILGNYRDIF (219 aa)).

GTPase-activating protein (GAP) for CDC42 and/or RHO1. The chain is Rho-type GTPase-activating protein 2 (RGA2) from Saccharomyces cerevisiae (strain ATCC 204508 / S288c) (Baker's yeast).